The primary structure comprises 155 residues: SsrA-binding protein (155 aa).

It belongs to the SmpB family.

Its subcellular location is the cytoplasm. In terms of biological role, required for rescue of stalled ribosomes mediated by trans-translation. Binds to transfer-messenger RNA (tmRNA), required for stable association of tmRNA with ribosomes. tmRNA and SmpB together mimic tRNA shape, replacing the anticodon stem-loop with SmpB. tmRNA is encoded by the ssrA gene; the 2 termini fold to resemble tRNA(Ala) and it encodes a 'tag peptide', a short internal open reading frame. During trans-translation Ala-aminoacylated tmRNA acts like a tRNA, entering the A-site of stalled ribosomes, displacing the stalled mRNA. The ribosome then switches to translate the ORF on the tmRNA; the nascent peptide is terminated with the 'tag peptide' encoded by the tmRNA and targeted for degradation. The ribosome is freed to recommence translation, which seems to be the essential function of trans-translation. This chain is SsrA-binding protein, found in Alkaliphilus oremlandii (strain OhILAs) (Clostridium oremlandii (strain OhILAs)).